A 356-amino-acid polypeptide reads, in one-letter code: Tricetin 3',4',5'-O-trimethyltransferase (356 aa).

123–129 (MNQDKVL) provides a ligand contact to substrate. The segment at 155 to 173 (AFEYHGTDPRFNRVFNEGM) is substrate binding. The S-adenosyl-L-methionine site is built by glycine 201, aspartate 224, aspartate 244, methionine 245, and lysine 258. The active-site Proton acceptor is the histidine 262.

Belongs to the class I-like SAM-binding methyltransferase superfamily. Cation-independent O-methyltransferase family. COMT subfamily. Homodimer. The monomer is fully active and dimerization is not required for sequential methylation. In terms of tissue distribution, expressed in roots, stems and leaves.

It catalyses the reaction tricetin + 3 S-adenosyl-L-methionine = 3',4',5'-O-trimethyltricetin + 3 S-adenosyl-L-homocysteine + 3 H(+). In terms of biological role, flavonoid B-ring-specific O-methyltransferase with a preference for flavones &gt; dihydroflavones &gt; flavonols that possess at least two B-ring hydroxyl groups. Active with tricetin, 5-hydroxyferulic acid, luteolin, quercitin, eriodictyol, quercetagetin, taxifolin, gossypetin and myricetin. No activity with naringenin, apigenin, kaempferol, 7,8-dihydroxy- or 5,7,8-trihydroxy flavones, chlorogenic acid, gallic acid or daphnetin. Catalyzes the sequential O-methylation of tricetin via 3'-O-methyltricetin, 3',5'-O-methyltricetin to 3',4',5'-O-trimethyltricetin. May also be involved in S lignin biosynthesis. In Triticum aestivum (Wheat), this protein is Tricetin 3',4',5'-O-trimethyltransferase (OMT2).